The sequence spans 58 residues: Small integral membrane protein 11 (58 aa).

A helical transmembrane segment spans residues P10 to M32. Residues G29–N58 adopt a coiled-coil conformation.

Expressed in heart, spleen, liver, stomach, muscle, lung, testis, skin, PBL and bone marrow.

Its subcellular location is the membrane. In Homo sapiens (Human), this protein is Small integral membrane protein 11.